Reading from the N-terminus, the 506-residue chain is Glutamate--tRNA ligase (506 aa).

A 'HIGH' region motif is present at residues 23–33 (PSPTGTPHVGL). The 'KMSKS' region signature appears at 267 to 271 (KLSKR). K270 is a binding site for ATP.

Belongs to the class-I aminoacyl-tRNA synthetase family. Glutamate--tRNA ligase type 1 subfamily. As to quaternary structure, monomer.

It is found in the cytoplasm. It catalyses the reaction tRNA(Glu) + L-glutamate + ATP = L-glutamyl-tRNA(Glu) + AMP + diphosphate. Catalyzes the attachment of glutamate to tRNA(Glu) in a two-step reaction: glutamate is first activated by ATP to form Glu-AMP and then transferred to the acceptor end of tRNA(Glu). This chain is Glutamate--tRNA ligase, found in Clavibacter michiganensis subsp. michiganensis (strain NCPPB 382).